A 422-amino-acid polypeptide reads, in one-letter code: Exodeoxyribonuclease 7 large subunit (422 aa).

This sequence belongs to the XseA family. In terms of assembly, heterooligomer composed of large and small subunits.

The protein localises to the cytoplasm. The catalysed reaction is Exonucleolytic cleavage in either 5'- to 3'- or 3'- to 5'-direction to yield nucleoside 5'-phosphates.. Functionally, bidirectionally degrades single-stranded DNA into large acid-insoluble oligonucleotides, which are then degraded further into small acid-soluble oligonucleotides. The chain is Exodeoxyribonuclease 7 large subunit from Leptospira interrogans serogroup Icterohaemorrhagiae serovar copenhageni (strain Fiocruz L1-130).